We begin with the raw amino-acid sequence, 386 residues long: MMMMALSKTFGQKPVKFQLEEDGEFYMIGSEVGNYLRMFRGSLYKRYPSLWRRLATVEERKKIVASSHENQRSHSPRRYHGYTTLATSVTLLKASEVEEILDGNDEKYKAVSISTEPPTYLREQKAKRNNQWVPTLPNSSHHLDAVPCSTTINRNRMGRDKKRTFPLCFDDHDPAVIHENASQPEVLVPIRLDMEIDGQKLRDAFTWNMNEKLMTPEMFSEILCDDLDLNPLTFVPAIASAIRQQIESYPTDSILEDQSDQRVIIKLNIHVGNISLVDQFEWDMSEKENSPEKFALKLCSELGLGGEFVTTIAYSIRGQLSWHQKTYAFSENPLPTVEIAIRNTGDADQWCPLLETLTDAEMEKKIRDQDRNTRRMRRLANTAPAW.

Residues 1-114 (MMMMALSKTF…DEKYKAVSIS (114 aa)) form a DNA-binding region.

The protein belongs to the SNF5 family. As to quaternary structure, component of the multiprotein chromatin-remodeling complexes SWI/SNF. Component of neural progenitors-specific chromatin remodeling complex (npBAF complex) and the neuron-specific chromatin remodeling complex (nBAF complex). Component of the BAF (SWI/SNF) chromatin remodeling complex. Component of the SWI/SNF-B (PBAF) chromatin remodeling complex. Binds to double-stranded DNA.

The protein resides in the nucleus. Functionally, involved in chromatin-remodeling. Core component of the BAF (SWI/SNF) complex. This ATP-dependent chromatin-remodeling complex plays important roles in cell proliferation and differentiation, in cellular antiviral activities and inhibition of tumor formation. Belongs to the neural progenitors-specific chromatin remodeling complex (npBAF complex) and the neuron-specific chromatin remodeling complex (nBAF complex) and may play a role in neural development. The chain is SWI/SNF-related matrix-associated actin-dependent regulator of chromatin subfamily B member 1 (SMARCB1) from Gallus gallus (Chicken).